We begin with the raw amino-acid sequence, 79 residues long: Serine protease inhibitor Kazal-type 1 (79 aa).

An N-terminal signal peptide occupies residues 1–18 (MKVAIIFLLSALALLSLA). The Kazal-like domain maps to 26-79 (NGKTPNCPKQIMGCPRIYDPVCGTNGITYPSECSLCFENRKFGTSIHIQRRGTC). 3 cysteine pairs are disulfide-bonded: Cys-32–Cys-61, Cys-39–Cys-58, and Cys-47–Cys-79.

The protein localises to the secreted. Serine protease inhibitor which exhibits anti-trypsin activity. In the pancreas, protects against trypsin-catalyzed premature activation of zymogens. Functionally, in the male reproductive tract, binds to sperm heads where it modulates sperm capacitance by inhibiting calcium uptake and nitrogen oxide (NO) production. The sequence is that of Serine protease inhibitor Kazal-type 1 from Rattus norvegicus (Rat).